A 178-amino-acid polypeptide reads, in one-letter code: Peptidyl-prolyl cis-trans isomerase H (178 aa).

The 164-residue stretch at F14–Q177 folds into the PPIase cyclophilin-type domain.

It belongs to the cyclophilin-type PPIase family. PPIase H subfamily.

It localises to the nucleus. It catalyses the reaction [protein]-peptidylproline (omega=180) = [protein]-peptidylproline (omega=0). PPIases accelerate the folding of proteins. It catalyzes the cis-trans isomerization of proline imidic peptide bonds in oligopeptides. In Rhizopus delemar (strain RA 99-880 / ATCC MYA-4621 / FGSC 9543 / NRRL 43880) (Mucormycosis agent), this protein is Peptidyl-prolyl cis-trans isomerase H (cyp7).